The following is a 129-amino-acid chain: Small ribosomal subunit protein uS9 (129 aa).

This sequence belongs to the universal ribosomal protein uS9 family.

The polypeptide is Small ribosomal subunit protein uS9 (Chlorobium luteolum (strain DSM 273 / BCRC 81028 / 2530) (Pelodictyon luteolum)).